A 429-amino-acid chain; its full sequence is High mobility group nucleosome-binding domain-containing protein 5 (429 aa).

The disordered stretch occupies residues M1–V429. At T29 the chain carries Phosphothreonine. A compositionally biased stretch (basic residues) spans K35–K44. Residue K64 forms a Glycyl lysine isopeptide (Lys-Gly) (interchain with G-Cter in SUMO2) linkage. The residue at position 90 (S90) is a Phosphoserine. 2 stretches are compositionally biased toward basic and acidic residues: residues M92–I101 and G109–E124. K98 participates in a covalent cross-link: Glycyl lysine isopeptide (Lys-Gly) (interchain with G-Cter in SUMO1); alternate. A Glycyl lysine isopeptide (Lys-Gly) (interchain with G-Cter in SUMO2); alternate cross-link involves residue K98. Residue K121 forms a Glycyl lysine isopeptide (Lys-Gly) (interchain with G-Cter in SUMO2) linkage. The span at E133–E152 shows a compositional bias: acidic residues. Over residues R153 to E195 the composition is skewed to basic and acidic residues. The span at E196–V209 shows a compositional bias: acidic residues. 2 stretches are compositionally biased toward basic and acidic residues: residues K210–R387 and N413–V429.

Belongs to the HMGN family. In terms of tissue distribution, expressed in trophoblast giant cells.

It is found in the nucleus. Preferentially binds to euchromatin and modulates cellular transcription by counteracting linker histone-mediated chromatin compaction. The polypeptide is High mobility group nucleosome-binding domain-containing protein 5 (Rattus norvegicus (Rat)).